We begin with the raw amino-acid sequence, 366 residues long: Putative type II methyltransferase M.MjaORF1200P (366 aa).

Residues 5 to 366 (LKFIDLFCGC…IARVIKENLK (362 aa)) form the SAM-dependent MTase C5-type domain. Cys133 is a catalytic residue.

It belongs to the class I-like SAM-binding methyltransferase superfamily. C5-methyltransferase family.

The catalysed reaction is a 2'-deoxycytidine in DNA + S-adenosyl-L-methionine = a 5-methyl-2'-deoxycytidine in DNA + S-adenosyl-L-homocysteine + H(+). A putative methylase that probably protects DNA from cleavage by the MjaORF1200P endonuclease. This chain is Putative type II methyltransferase M.MjaORF1200P, found in Methanocaldococcus jannaschii (strain ATCC 43067 / DSM 2661 / JAL-1 / JCM 10045 / NBRC 100440) (Methanococcus jannaschii).